A 120-amino-acid chain; its full sequence is Large ribosomal subunit protein bL12 (120 aa).

It belongs to the bacterial ribosomal protein bL12 family. Homodimer. Part of the ribosomal stalk of the 50S ribosomal subunit. Forms a multimeric L10(L12)X complex, where L10 forms an elongated spine to which 2 to 4 L12 dimers bind in a sequential fashion. Binds GTP-bound translation factors.

In terms of biological role, forms part of the ribosomal stalk which helps the ribosome interact with GTP-bound translation factors. Is thus essential for accurate translation. The sequence is that of Large ribosomal subunit protein bL12 from Lactobacillus helveticus (strain DPC 4571).